Reading from the N-terminus, the 381-residue chain is Spermidine/putrescine import ATP-binding protein PotA (381 aa).

In terms of domain architecture, ABC transporter spans 22–252 (VELRNVFKFF…PKTSFVADFI (231 aa)). 54–61 (GPSGCGKT) serves as a coordination point for ATP.

This sequence belongs to the ABC transporter superfamily. Spermidine/putrescine importer (TC 3.A.1.11.1) family. In terms of assembly, the complex is composed of two ATP-binding proteins (PotA), two transmembrane proteins (PotB and PotC) and a solute-binding protein (PotD).

The protein localises to the cell inner membrane. The enzyme catalyses ATP + H2O + polyamine-[polyamine-binding protein]Side 1 = ADP + phosphate + polyamineSide 2 + [polyamine-binding protein]Side 1.. Its function is as follows. Part of the ABC transporter complex PotABCD involved in spermidine/putrescine import. Responsible for energy coupling to the transport system. This is Spermidine/putrescine import ATP-binding protein PotA from Nostoc sp. (strain PCC 7120 / SAG 25.82 / UTEX 2576).